A 465-amino-acid chain; its full sequence is Cysteine--tRNA ligase (465 aa).

C30 is a Zn(2+) binding site. The 'HIGH' region signature appears at 32-42 (MTVYDYCHVGH). Residues C214, H239, and E243 each coordinate Zn(2+). Residues 271–275 (KMSKS) carry the 'KMSKS' region motif. K274 provides a ligand contact to ATP.

Belongs to the class-I aminoacyl-tRNA synthetase family. In terms of assembly, monomer. It depends on Zn(2+) as a cofactor.

The protein localises to the cytoplasm. The enzyme catalyses tRNA(Cys) + L-cysteine + ATP = L-cysteinyl-tRNA(Cys) + AMP + diphosphate. This Paraburkholderia xenovorans (strain LB400) protein is Cysteine--tRNA ligase.